Consider the following 98-residue polypeptide: Large ribosomal subunit protein uL23 (98 aa).

Belongs to the universal ribosomal protein uL23 family. In terms of assembly, part of the 50S ribosomal subunit. Contacts protein L29, and trigger factor when it is bound to the ribosome.

Its function is as follows. One of the early assembly proteins it binds 23S rRNA. One of the proteins that surrounds the polypeptide exit tunnel on the outside of the ribosome. Forms the main docking site for trigger factor binding to the ribosome. In Rickettsia prowazekii (strain Madrid E), this protein is Large ribosomal subunit protein uL23.